The chain runs to 61 residues: UPF0434 protein Nmul_A1027 (61 aa).

The protein belongs to the UPF0434 family.

The protein is UPF0434 protein Nmul_A1027 of Nitrosospira multiformis (strain ATCC 25196 / NCIMB 11849 / C 71).